A 214-amino-acid chain; its full sequence is tRNA (guanine-N(7)-)-methyltransferase (214 aa).

4 residues coordinate S-adenosyl-L-methionine: E45, E70, D97, and D119. D119 is an active-site residue. Substrate-binding positions include K123, D155, and 192-195; that span reads TEYE.

Belongs to the class I-like SAM-binding methyltransferase superfamily. TrmB family.

It catalyses the reaction guanosine(46) in tRNA + S-adenosyl-L-methionine = N(7)-methylguanosine(46) in tRNA + S-adenosyl-L-homocysteine. The protein operates within tRNA modification; N(7)-methylguanine-tRNA biosynthesis. Its function is as follows. Catalyzes the formation of N(7)-methylguanine at position 46 (m7G46) in tRNA. In Clostridioides difficile (strain 630) (Peptoclostridium difficile), this protein is tRNA (guanine-N(7)-)-methyltransferase.